We begin with the raw amino-acid sequence, 296 residues long: NAD kinase (296 aa).

The Proton acceptor role is filled by D74. NAD(+) is bound by residues 74–75 (DG), 148–149 (ND), R176, D178, and 189–194 (TAYALS).

The protein belongs to the NAD kinase family. The cofactor is a divalent metal cation.

It is found in the cytoplasm. It carries out the reaction NAD(+) + ATP = ADP + NADP(+) + H(+). Involved in the regulation of the intracellular balance of NAD and NADP, and is a key enzyme in the biosynthesis of NADP. Catalyzes specifically the phosphorylation on 2'-hydroxyl of the adenosine moiety of NAD to yield NADP. The chain is NAD kinase from Nitrosomonas eutropha (strain DSM 101675 / C91 / Nm57).